The sequence spans 313 residues: Adhesin MafA 2 (313 aa).

The signal sequence occupies residues 1 to 14; the sequence is MKTLLLLIPLVLTA. Cysteine 15 is lipidated: N-palmitoyl cysteine. A lipid anchor (S-diacylglycerol cysteine) is attached at cysteine 15. Residues 282 to 297 show a composition bias toward polar residues; sequence GDTTAQNRPDFKQNNG. Residues 282 to 313 are disordered; that stretch reads GDTTAQNRPDFKQNNGKKPDVGNEVIRRRKGG.

Belongs to the MafA family.

Its subcellular location is the cell outer membrane. In Neisseria meningitidis serogroup A / serotype 4A (strain DSM 15465 / Z2491), this protein is Adhesin MafA 2 (mafA2).